Consider the following 212-residue polypeptide: MAKQYDVLFRLLLIGDSGVGKTCLLCRFTDNEFHSSHISTIGVDFKMKTIEVDGIKVRIQIWDTAGQERYQTITKQYYRRAQGIFLVYDISSERSYQHIMKWVSDVDEYAPEGVQKILIGNKADEEQKRQVGREQGQQLAKEYGMDFYETSACTNLNIKESFTRLTELVLQAHRKELDGLRTCASNELALAELEEDEGKTEGPANSSKTCWC.

GTP is bound by residues S17, G18, V19, G20, K21, T22, C23, S35, S39, and T40. T22 is a Mg(2+) binding site. Short sequence motifs (switch) lie at residues 31–45 (NEFH…GVDF) and 63–80 (DTAG…YYRR). Residues T40 and D63 each coordinate Mg(2+). Positions 66, 121, 122, 124, 151, and 152 each coordinate GTP. S-geranylgeranyl cysteine attachment occurs at residues C210 and C212. Cysteine methyl ester is present on C212.

The protein belongs to the small GTPase superfamily. Rab family. As to quaternary structure, the GTP bound form of RAB15 interacts with REP15. Interacts (GTP-bound form) with MICAL1, MICAL3, MICALCL, EHBP1 and EHBP1L1. Mg(2+) serves as cofactor. As to expression, expressed predominantly in neural tissues.

The protein resides in the cell membrane. The enzyme catalyses GTP + H2O = GDP + phosphate + H(+). Its activity is regulated as follows. Regulated by guanine nucleotide exchange factors (GEFs) which promote the exchange of bound GDP for free GTP. Regulated by GTPase activating proteins (GAPs) which increase the GTP hydrolysis activity. Inhibited by GDP dissociation inhibitors (GDIs). Its function is as follows. The small GTPases Rab are key regulators of intracellular membrane trafficking, from the formation of transport vesicles to their fusion with membranes. Rabs cycle between an inactive GDP-bound form and an active GTP-bound form that is able to recruit to membranes different sets of downstream effectors directly responsible for vesicle formation, movement, tethering and fusion. RAB15 may act in concert with RAB3A in regulating aspects of synaptic vesicle membrane flow within the nerve terminal. In Rattus norvegicus (Rat), this protein is Ras-related protein Rab-15.